The sequence spans 131 residues: Bacteriohemerythrin (131 aa).

The Fe cation site is built by His-20, Glu-23, His-56, Glu-60, His-75, His-79, His-117, and Asp-122.

This sequence belongs to the hemerythrin family. As to quaternary structure, monomer.

Oxygen-binding protein. May be involved in a storage mechanism or for delivery to oxygen-requiring enzymes. The oxygen-binding site contains two iron atoms. The sequence is that of Bacteriohemerythrin from Aquifex aeolicus (strain VF5).